We begin with the raw amino-acid sequence, 289 residues long: Inorganic pyrophosphatase (289 aa).

S2 carries the post-translational modification N-acetylserine. The residue at position 57 (K57) is an N6-acetyllysine. Residues D116, D121, and D153 each contribute to the Mg(2+) site. An N6-acetyllysine modification is found at K228. S250 bears the Phosphoserine mark.

Belongs to the PPase family. As to quaternary structure, homodimer. The cofactor is Mg(2+).

It localises to the cytoplasm. It catalyses the reaction diphosphate + H2O = 2 phosphate + H(+). This Mus musculus (Mouse) protein is Inorganic pyrophosphatase (Ppa1).